We begin with the raw amino-acid sequence, 721 residues long: Catalase-peroxidase 1 (721 aa).

Residues 98–226 (WHAAGTYRIA…LAAVMMGLIY (129 aa)) constitute a cross-link (tryptophyl-tyrosyl-methioninium (Trp-Tyr) (with M-252)). His99 functions as the Proton acceptor in the catalytic mechanism. Positions 226–252 (YVNPEGVDGQPDPLKTAHDVRVTFARM) form a cross-link, tryptophyl-tyrosyl-methioninium (Tyr-Met) (with W-98). His267 lines the heme b pocket.

It belongs to the peroxidase family. Peroxidase/catalase subfamily. In terms of assembly, homodimer or homotetramer. It depends on heme b as a cofactor. In terms of processing, formation of the three residue Trp-Tyr-Met cross-link is important for the catalase, but not the peroxidase activity of the enzyme.

It catalyses the reaction H2O2 + AH2 = A + 2 H2O. It carries out the reaction 2 H2O2 = O2 + 2 H2O. Bifunctional enzyme with both catalase and broad-spectrum peroxidase activity. The polypeptide is Catalase-peroxidase 1 (Vibrio parahaemolyticus serotype O3:K6 (strain RIMD 2210633)).